The sequence spans 227 residues: Esterase OVCA2 (227 aa).

Residues Ser119, Asp179, and His206 each act as charge relay system in the active site.

It belongs to the LovG family.

The catalysed reaction is a carboxylic ester + H2O = an alcohol + a carboxylate + H(+). Functionally, exhibits ester hydrolase activity with a strong preference for long-chain alkyl ester substrates and high selectivity against a variety of short, branched, and substituted esters. Is able to hydrolyze ester bonds within a wide range of p-nitrophenyl derivatives (C2-C14) in vitro, with a strong preference toward substrates of &gt;8 carbons. In Bos taurus (Bovine), this protein is Esterase OVCA2 (OVCA2).